Here is a 427-residue protein sequence, read N- to C-terminus: Imidazolonepropionase (427 aa).

Residues histidine 96 and histidine 98 each contribute to the Fe(3+) site. Zn(2+)-binding residues include histidine 96 and histidine 98. 3 residues coordinate 4-imidazolone-5-propanoate: arginine 105, tyrosine 168, and histidine 201. Tyrosine 168 is a binding site for N-formimidoyl-L-glutamate. Residue histidine 265 participates in Fe(3+) binding. Residue histidine 265 participates in Zn(2+) binding. Glutamine 268 lines the 4-imidazolone-5-propanoate pocket. Aspartate 340 is a Fe(3+) binding site. Aspartate 340 serves as a coordination point for Zn(2+). N-formimidoyl-L-glutamate-binding residues include asparagine 342 and glycine 344. Threonine 345 is a binding site for 4-imidazolone-5-propanoate.

The protein belongs to the metallo-dependent hydrolases superfamily. HutI family. Requires Zn(2+) as cofactor. It depends on Fe(3+) as a cofactor.

The protein resides in the cytoplasm. It catalyses the reaction 4-imidazolone-5-propanoate + H2O = N-formimidoyl-L-glutamate. It participates in amino-acid degradation; L-histidine degradation into L-glutamate; N-formimidoyl-L-glutamate from L-histidine: step 3/3. In terms of biological role, catalyzes the hydrolytic cleavage of the carbon-nitrogen bond in imidazolone-5-propanoate to yield N-formimidoyl-L-glutamate. It is the third step in the universal histidine degradation pathway. The chain is Imidazolonepropionase from Psychrobacter cryohalolentis (strain ATCC BAA-1226 / DSM 17306 / VKM B-2378 / K5).